The primary structure comprises 239 residues: Norbelladine 4'-O-methyltransferase 3 (239 aa).

Residues Val-55, Glu-77, 79-80 (GV), Ser-85, Asp-103, and Ala-132 each bind S-adenosyl-L-methionine. Asp-155 contacts a divalent metal cation. Asp-157 contributes to the S-adenosyl-L-methionine binding site. Residues Asp-181 and Asn-182 each contribute to the a divalent metal cation site.

The protein belongs to the class I-like SAM-binding methyltransferase superfamily. Cation-dependent O-methyltransferase family. The cofactor is Mg(2+).

It carries out the reaction norbelladine + S-adenosyl-L-methionine = 4'-O-methylnorbelladine + S-adenosyl-L-homocysteine + H(+). It participates in alkaloid biosynthesis. Functionally, 4'-O-methyltransferase converting norbelladine to 4'-O-methylnorbelladine. 4'-O-methylnorbelladine is a precursor to all Amaryllidaceae alkaloids such as galanthamine, lycorine and haemanthamine, and including haemanthamine- and crinamine-type alkaloids, promising anticancer agents. In Narcissus aff. pseudonarcissus MK-2014 (Daffodil), this protein is Norbelladine 4'-O-methyltransferase 3.